The sequence spans 292 residues: Poly-beta-1,6-N-acetyl-D-glucosamine N-deacetylase (292 aa).

The first 28 residues, 1 to 28 (MKYRKFIILVLSILIILPVSTLDGHHIA), serve as a signal peptide directing secretion. Residues 114–292 (RSVWINFDDM…WDGFHEKDET (179 aa)) enclose the NodB homology domain.

The protein belongs to the polysaccharide deacetylase family.

The protein localises to the secreted. The protein resides in the cell wall. Functionally, catalyzes the N-deacetylation of poly-beta-1,6-N-acetyl-D-glucosamine (PNAG, also referred to as PIA), a biofilm adhesin polysaccharide. N-deacetylation is crucial for attachment of the polysaccharide to the bacterial cell surface; it leads to the introduction of positive charges in the otherwise neutral PIA polymer, allowing electrostatic interactions. The protein is Poly-beta-1,6-N-acetyl-D-glucosamine N-deacetylase (icaB) of Staphylococcus aureus (strain COL).